A 171-amino-acid chain; its full sequence is Small ribosomal subunit protein uS5 (171 aa).

In terms of domain architecture, S5 DRBM spans 15–78; it reads LEEKVVKINR…EKAKKQLVRI (64 aa).

The protein belongs to the universal ribosomal protein uS5 family. In terms of assembly, part of the 30S ribosomal subunit. Contacts proteins S4 and S8.

In terms of biological role, with S4 and S12 plays an important role in translational accuracy. Located at the back of the 30S subunit body where it stabilizes the conformation of the head with respect to the body. In Onion yellows phytoplasma (strain OY-M), this protein is Small ribosomal subunit protein uS5.